Reading from the N-terminus, the 571-residue chain is Urease subunit alpha (571 aa).

The Urease domain maps to 133-571 (GGIDTHVHFI…LPLTQRYFLF (439 aa)). Positions 138, 140, and 221 each coordinate Ni(2+). Residue Lys221 is modified to N6-carboxylysine. Substrate is bound at residue His223. Residues His250 and His276 each coordinate Ni(2+). Residue His324 is the Proton donor of the active site. A Ni(2+)-binding site is contributed by Asp364.

Belongs to the metallo-dependent hydrolases superfamily. Urease alpha subunit family. Heterotrimer of UreA (gamma), UreB (beta) and UreC (alpha) subunits. Three heterotrimers associate to form the active enzyme. Ni cation serves as cofactor. In terms of processing, carboxylation allows a single lysine to coordinate two nickel ions.

It localises to the cytoplasm. The catalysed reaction is urea + 2 H2O + H(+) = hydrogencarbonate + 2 NH4(+). It functions in the pathway nitrogen metabolism; urea degradation; CO(2) and NH(3) from urea (urease route): step 1/1. This is Urease subunit alpha from Staphylococcus epidermidis (strain ATCC 35984 / DSM 28319 / BCRC 17069 / CCUG 31568 / BM 3577 / RP62A).